Consider the following 448-residue polypeptide: N-succinylarginine dihydrolase (448 aa).

Substrate is bound by residues 19–28 (GGLSYGNVAS), Asn-110, and 137–138 (HR). Residue Glu-174 is part of the active site. A substrate-binding site is contributed by Arg-214. His-250 is an active-site residue. Asp-252 and Asn-365 together coordinate substrate. Cys-371 acts as the Nucleophile in catalysis.

Belongs to the succinylarginine dihydrolase family. As to quaternary structure, homodimer.

The catalysed reaction is N(2)-succinyl-L-arginine + 2 H2O + 2 H(+) = N(2)-succinyl-L-ornithine + 2 NH4(+) + CO2. It functions in the pathway amino-acid degradation; L-arginine degradation via AST pathway; L-glutamate and succinate from L-arginine: step 2/5. Functionally, catalyzes the hydrolysis of N(2)-succinylarginine into N(2)-succinylornithine, ammonia and CO(2). The sequence is that of N-succinylarginine dihydrolase from Pseudomonas syringae pv. syringae (strain B728a).